A 613-amino-acid polypeptide reads, in one-letter code: MFNSNIPASSLLSIDSGGLLMGGHTPKTPEILNSLIAMTNPLENFSYSSAAAAAAAVSVASSSASCSAASTPVVTVRHFNGHPNGQSHSQDSSHSSCSGSPLDSPAGTATTPSVQQTCSRLIKEGLKLSIQSKRKLSTCDSSSGSEQPHSKYSRRSSNHNGHSGSSNNYSGSMSNANDLDDDCEESSDDDSETKSQPKGLTPEDEDRRRRRRERNKIAATKCRMKKRERTQNLIKESEVLDTQNVELKNQVRQLETERQKLVDMLKSHGCQRAGGCQLPSQLLQSPAQKYLSELELETVSIDGPNSGNNNQRLQSIPSMATFKYGSKTAAAMAQQLPNGYCKPSPSAQEFEHAGYQQQQQQQQQQQPQSLNPAGNNVIDQQHANPSPSLLSDYVPNCDGLTGSASNHPSHNNNNNNNNSSGASSNTSNNNSNISSHSSNATSSTTPTATSSAIEFVKNELVDSQSPYTTALSAERFLFEPSDGFPDIKHACVLPSPCGINGLNMASVVNTNGSTGNNNNSHHNNNNNNNNHLMDFHQGLQHGNIGTGVGVGVGVGVGVGVGVGVMTPYDDEQLLLLKNGCFATDLLSQLVEEGGEYVDLDSATAFMNNGSCLA.

Disordered regions lie at residues 77–115 (RHFN…PSVQ) and 133–218 (KRKL…NKIA). The span at 85–105 (GQSHSQDSSHSSCSGSPLDSP) shows a compositional bias: low complexity. Residues 138–147 (TCDSSSGSEQ) are compositionally biased toward polar residues. Residues 158-175 (NHNGHSGSSNNYSGSMSN) show a composition bias toward low complexity. Positions 178–191 (DLDDDCEESSDDDS) are enriched in acidic residues. A bZIP domain is found at 205 to 268 (EDRRRRRRER…QKLVDMLKSH (64 aa)). The basic motif stretch occupies residues 207–229 (RRRRRRERNKIAATKCRMKKRER). A leucine-zipper region spans residues 233–261 (LIKESEVLDTQNVELKNQVRQLETERQKL). A disordered region spans residues 337-446 (PNGYCKPSPS…SSNATSSTTP (110 aa)). Residues 356-368 (QQQQQQQQQQQPQ) show a composition bias toward low complexity. The segment covering 369–389 (SLNPAGNNVIDQQHANPSPSL) has biased composition (polar residues). The segment covering 402 to 446 (GSASNHPSHNNNNNNNNSSGASSNTSNNNSNISSHSSNATSSTTP) has biased composition (low complexity).

Belongs to the bZIP family. ATF subfamily. Interacts with Jra/jun; the interaction enhances the DNA-binding activity of Atf3. In terms of tissue distribution, moderate expression in some regions of the larval nervous system, the ring gland and imaginal disks. High expression in larval gut, excretory malpighian tubules, salivary glands, and, to a lesser extent, the fat body where levels are approximately 2.5-fold less than the gut.

The protein resides in the nucleus. In terms of biological role, transcription factor which binds to the cAMP response element (CRE). Regulates metabolic and innate immune homeostasis, possibly by controlling appropriate expression of genes involved in peritrophic matrix composition and ensuring the normal digestive and immune function of the gut. Required for the expression of odorant receptors Or43b and Or47b. This Drosophila melanogaster (Fruit fly) protein is Activating transcription factor 3.